We begin with the raw amino-acid sequence, 78 residues long: Small, acid-soluble spore protein Tlp (78 aa).

The segment at 32–78 (SEEQLSFASEAEQEQIREKNERRNESIEAMRNEIHDEAEARKNGYHQ) is disordered. Over residues 45–78 (EQIREKNERRNESIEAMRNEIHDEAEARKNGYHQ) the composition is skewed to basic and acidic residues.

The protein belongs to the Tlp family.

It localises to the spore core. In Bacillus licheniformis (strain ATCC 14580 / DSM 13 / JCM 2505 / CCUG 7422 / NBRC 12200 / NCIMB 9375 / NCTC 10341 / NRRL NRS-1264 / Gibson 46), this protein is Small, acid-soluble spore protein Tlp.